Here is a 157-residue protein sequence, read N- to C-terminus: Transcription elongation factor GreA (157 aa).

It belongs to the GreA/GreB family.

Its function is as follows. Necessary for efficient RNA polymerase transcription elongation past template-encoded arresting sites. The arresting sites in DNA have the property of trapping a certain fraction of elongating RNA polymerases that pass through, resulting in locked ternary complexes. Cleavage of the nascent transcript by cleavage factors such as GreA or GreB allows the resumption of elongation from the new 3'terminus. GreA releases sequences of 2 to 3 nucleotides. This chain is Transcription elongation factor GreA, found in Brucella abortus (strain S19).